Consider the following 467-residue polypeptide: ATP-dependent protease ATPase subunit HslU (467 aa).

ATP contacts are provided by residues I20, 62–67 (GVGKTE), D280, E345, and R417.

It belongs to the ClpX chaperone family. HslU subfamily. A double ring-shaped homohexamer of HslV is capped on each side by a ring-shaped HslU homohexamer. The assembly of the HslU/HslV complex is dependent on binding of ATP.

Its subcellular location is the cytoplasm. ATPase subunit of a proteasome-like degradation complex; this subunit has chaperone activity. The binding of ATP and its subsequent hydrolysis by HslU are essential for unfolding of protein substrates subsequently hydrolyzed by HslV. HslU recognizes the N-terminal part of its protein substrates and unfolds these before they are guided to HslV for hydrolysis. The protein is ATP-dependent protease ATPase subunit HslU of Ligilactobacillus salivarius (strain UCC118) (Lactobacillus salivarius).